The sequence spans 157 residues: Ribosomal RNA large subunit methyltransferase H (157 aa).

S-adenosyl-L-methionine is bound by residues Leu73, Gly104, and 123–128 (LGPLTL).

Belongs to the RNA methyltransferase RlmH family. In terms of assembly, homodimer.

Its subcellular location is the cytoplasm. It catalyses the reaction pseudouridine(1915) in 23S rRNA + S-adenosyl-L-methionine = N(3)-methylpseudouridine(1915) in 23S rRNA + S-adenosyl-L-homocysteine + H(+). In terms of biological role, specifically methylates the pseudouridine at position 1915 (m3Psi1915) in 23S rRNA. This is Ribosomal RNA large subunit methyltransferase H from Xylella fastidiosa (strain M23).